A 228-amino-acid chain; its full sequence is Ribonuclease H (228 aa).

Positions 2-142 (GPMRTIVYAD…ADRLATLGRR (141 aa)) constitute an RNase H type-1 domain. Asp11, Glu49, Asp71, and Asp134 together coordinate Mg(2+).

This sequence belongs to the RNase H family. In terms of assembly, monomer. Requires Mg(2+) as cofactor.

The protein resides in the cytoplasm. The enzyme catalyses Endonucleolytic cleavage to 5'-phosphomonoester.. In terms of biological role, endonuclease that specifically degrades the RNA of RNA-DNA hybrids. This is Ribonuclease H from Methylorubrum extorquens (strain PA1) (Methylobacterium extorquens).